Here is a 119-residue protein sequence, read N- to C-terminus: Holo-[acyl-carrier-protein] synthase (119 aa).

D8 and E53 together coordinate Mg(2+).

The protein belongs to the P-Pant transferase superfamily. AcpS family. Mg(2+) is required as a cofactor.

Its subcellular location is the cytoplasm. It catalyses the reaction apo-[ACP] + CoA = holo-[ACP] + adenosine 3',5'-bisphosphate + H(+). Functionally, transfers the 4'-phosphopantetheine moiety from coenzyme A to a Ser of acyl-carrier-protein. The polypeptide is Holo-[acyl-carrier-protein] synthase (Petrotoga mobilis (strain DSM 10674 / SJ95)).